We begin with the raw amino-acid sequence, 268 residues long: Chymotrypsin-C (268 aa).

Positions 1–16 are cleaved as a signal peptide; sequence MLGITVLAAILACASS. Positions 17 to 29 are cleaved as a propeptide — activation peptide; that stretch reads CGDPTFPPNLSAR. Cystine bridges form between Cys-17-Cys-141, Cys-59-Cys-75, Cys-155-Cys-222, Cys-186-Cys-202, and Cys-212-Cys-243. The N-linked (GlcNAc...) asparagine glycan is linked to Asn-25. Residues 30–267 form the Peptidase S1 domain; that stretch reads VVGGEDAVPN…YIDWIKEKIQ (238 aa). The active-site Charge relay system is His-74. 2 N-linked (GlcNAc...) asparagine glycosylation sites follow: Asn-79 and Asn-90. The Charge relay system role is filled by Asp-121. Residue Asn-182 is glycosylated (N-linked (GlcNAc...) asparagine). Residue Ser-216 is the Charge relay system of the active site.

This sequence belongs to the peptidase S1 family. Elastase subfamily.

The catalysed reaction is Preferential cleavage: Leu-|-Xaa, Tyr-|-Xaa, Phe-|-Xaa, Met-|-Xaa, Trp-|-Xaa, Gln-|-Xaa, Asn-|-Xaa.. Its function is as follows. Regulates activation and degradation of trypsinogens and procarboxypeptidases by targeting specific cleavage sites within their zymogen precursors. Has chymotrypsin-type protease activity and hypocalcemic activity. Cleaves TRY4 and TRY5 and thereby inhibits their autoactivation. This Mus musculus (Mouse) protein is Chymotrypsin-C (Ctrc).